The sequence spans 360 residues: Photosystem II protein D1 (360 aa).

Transmembrane regions (helical) follow at residues 29 to 46 (YIGW…TATS), 118 to 133 (HFFI…EWEL), and 142 to 156 (WIAV…AATA). Residue His-118 coordinates chlorophyll a. A pheophytin a-binding site is contributed by Tyr-126. 2 residues coordinate [CaMn4O5] cluster: Asp-170 and Glu-189. The helical transmembrane segment at 197–218 (FHMMGVAGVFGGSLFSAMHGSL) threads the bilayer. His-198 is a chlorophyll a binding site. Residues His-215 and 264-265 (SF) each bind a quinone. His-215 contacts Fe cation. His-272 is a Fe cation binding site. The helical transmembrane segment at 274–288 (FLALWPVVCICVTAL) threads the bilayer. [CaMn4O5] cluster contacts are provided by His-332, Glu-333, Asp-342, and Ala-344. Positions 345–360 (SEVSLPVALNKVEING) are excised as a propeptide.

It belongs to the reaction center PufL/M/PsbA/D family. As to quaternary structure, PSII is composed of 1 copy each of membrane proteins PsbA, PsbB, PsbC, PsbD, PsbE, PsbF, PsbH, PsbI, PsbJ, PsbK, PsbL, PsbM, PsbT, PsbY, PsbZ, Psb30/Ycf12, at least 3 peripheral proteins of the oxygen-evolving complex and a large number of cofactors. It forms dimeric complexes. The cofactor is The D1/D2 heterodimer binds P680, chlorophylls that are the primary electron donor of PSII, and subsequent electron acceptors. It shares a non-heme iron and each subunit binds pheophytin, quinone, additional chlorophylls, carotenoids and lipids. D1 provides most of the ligands for the Mn4-Ca-O5 cluster of the oxygen-evolving complex (OEC). There is also a Cl(-1) ion associated with D1 and D2, which is required for oxygen evolution. The PSII complex binds additional chlorophylls, carotenoids and specific lipids.. Tyr-161 forms a radical intermediate that is referred to as redox-active TyrZ, YZ or Y-Z. Post-translationally, C-terminally processed by CTPA; processing is essential to allow assembly of the oxygen-evolving complex and thus photosynthetic growth.

The protein localises to the plastid. It localises to the chloroplast thylakoid membrane. It catalyses the reaction 2 a plastoquinone + 4 hnu + 2 H2O = 2 a plastoquinol + O2. In terms of biological role, photosystem II (PSII) is a light-driven water:plastoquinone oxidoreductase that uses light energy to abstract electrons from H(2)O, generating O(2) and a proton gradient subsequently used for ATP formation. It consists of a core antenna complex that captures photons, and an electron transfer chain that converts photonic excitation into a charge separation. The D1/D2 (PsbA/PsbD) reaction center heterodimer binds P680, the primary electron donor of PSII as well as several subsequent electron acceptors. This chain is Photosystem II protein D1, found in Galdieria sulphuraria (Red alga).